A 247-amino-acid polypeptide reads, in one-letter code: RNA-free ribonuclease P (247 aa).

It belongs to the HARP family.

The catalysed reaction is Endonucleolytic cleavage of RNA, removing 5'-extranucleotides from tRNA precursor.. Functionally, RNA-free RNase P that catalyzes the removal of the 5'-leader sequence from pre-tRNA to produce the mature 5'-terminus. This chain is RNA-free ribonuclease P, found in Methanosarcina mazei (strain ATCC BAA-159 / DSM 3647 / Goe1 / Go1 / JCM 11833 / OCM 88) (Methanosarcina frisia).